Consider the following 526-residue polypeptide: Butyrophilin subfamily 1 member A1 (526 aa).

The first 26 residues, 1–26 (MAVFPSSGLPRCLLTLILLQLPKLDS), serve as a signal peptide directing secretion. Ig-like V-type domains lie at 27 to 138 (APFD…ALVH) and 148 to 234 (PHIS…VEIS). The Extracellular segment spans residues 27–242 (APFDVIGPPE…ISIPASSLPR (216 aa)). Cystine bridges form between C50/C124 and C164/C218. Residues N55 and N215 are each glycosylated (N-linked (GlcNAc...) asparagine). The helical transmembrane segment at 243 to 269 (LTPWIVAVAVILMVLGLLTIGSIFFTW) threads the bilayer. Over 270 to 526 (RLYNERPRER…IPTQPSQGAP (257 aa)) the chain is Cytoplasmic. A B30.2/SPRY domain is found at 285 to 479 (SKERLLEELK…LTICPIADGP (195 aa)). The segment at 495–526 (IPLSPMGEDSAPRDADTLHSKLIPTQPSQGAP) is disordered. The segment covering 504 to 513 (SAPRDADTLH) has biased composition (basic and acidic residues). A compositionally biased stretch (polar residues) spans 517-526 (IPTQPSQGAP).

This sequence belongs to the immunoglobulin superfamily. BTN/MOG family. Seems to associate with xanthine dehydrogenase/oxidase. In terms of processing, N-glycosylated.

The protein resides in the membrane. The protein localises to the secreted. In terms of biological role, may function in the secretion of milk-fat droplets. May act as a specific membrane-associated receptor for the association of cytoplasmic droplets with the apical plasma membrane. Inhibits the proliferation of CD4 and CD8 T-cells activated by anti-CD3 antibodies, T-cell metabolism and IL2 and IFNG secretion. The protein is Butyrophilin subfamily 1 member A1 (BTN1A1) of Homo sapiens (Human).